A 529-amino-acid chain; its full sequence is Listeriolysin O (529 aa).

The first 24 residues, 1–24, serve as a signal peptide directing secretion; that stretch reads MKKIMLVFITLILVSLPIAQQTEA. 4 consecutive transmembrane segments (beta stranded) span residues 214–227, 234–243, 312–321, and 329–341; these read ESQL…AFKA, VNFGAISEGK, STKVKAAFDA, and SGDV…IKNS. The short motif at 483–493 is the Conserved undecapeptide element; that stretch reads ECTGLAWEWWR. Positions 515–516 match the Cholesterol binding motif; it reads TL.

The protein belongs to the cholesterol-dependent cytolysin family. As to quaternary structure, homooligomeric pore complex of 35 to 50 subunits; when inserted in the host membrane.

The protein localises to the secreted. The protein resides in the host membrane. It is found in the host cell membrane. With respect to regulation, activity of listeriolysin O is regulated on multiple levels. It should be high in the phagosome, thereby allowing escape of the bacteria from the phagosomal compartment. Then, once inside the host cytosol, the activity must be controlled to prevent lysis of the host plasma membrane and loss of the intracellular environment. Its function is as follows. A cholesterol-dependent toxin that causes cytolysis by forming pores in cholesterol containing host membranes. After binding to target membranes, the protein undergoes a major conformation change, leading to its insertion in the host membrane and formation of an oligomeric pore complex. Cholesterol is required for binding to host membranes, membrane insertion and pore formation; cholesterol binding is mediated by a Thr-Leu pair in the C-terminus. Acts as a major virulence factor required for the escape of bacteria from phagosomal vacuoles and entry into the host cytosol. Can be reversibly inactivated by oxidation. This is Listeriolysin O (hly) from Listeria monocytogenes serotype 4b (strain CLIP80459).